The primary structure comprises 183 residues: Large ribosomal subunit protein uL5 (183 aa).

Belongs to the universal ribosomal protein uL5 family. As to quaternary structure, part of the 50S ribosomal subunit; part of the 5S rRNA/L5/L18/L25 subcomplex. Contacts the 5S rRNA and the P site tRNA. Forms a bridge to the 30S subunit in the 70S ribosome.

This is one of the proteins that bind and probably mediate the attachment of the 5S RNA into the large ribosomal subunit, where it forms part of the central protuberance. In the 70S ribosome it contacts protein S13 of the 30S subunit (bridge B1b), connecting the 2 subunits; this bridge is implicated in subunit movement. Contacts the P site tRNA; the 5S rRNA and some of its associated proteins might help stabilize positioning of ribosome-bound tRNAs. The sequence is that of Large ribosomal subunit protein uL5 from Kosmotoga olearia (strain ATCC BAA-1733 / DSM 21960 / TBF 19.5.1).